The following is a 623-amino-acid chain: Isocitrate dehydrogenase kinase/phosphatase (623 aa).

Residues 344–350 (APGIKGM) and K365 each bind ATP. D400 is a catalytic residue.

It belongs to the AceK family.

Its subcellular location is the cytoplasm. It carries out the reaction L-seryl-[isocitrate dehydrogenase] + ATP = O-phospho-L-seryl-[isocitrate dehydrogenase] + ADP + H(+). Its function is as follows. Bifunctional enzyme which can phosphorylate or dephosphorylate isocitrate dehydrogenase (IDH) on a specific serine residue. This is a regulatory mechanism which enables bacteria to bypass the Krebs cycle via the glyoxylate shunt in response to the source of carbon. When bacteria are grown on glucose, IDH is fully active and unphosphorylated, but when grown on acetate or ethanol, the activity of IDH declines drastically concomitant with its phosphorylation. This is Isocitrate dehydrogenase kinase/phosphatase from Polaromonas naphthalenivorans (strain CJ2).